Reading from the N-terminus, the 187-residue chain is CASP-like protein 2 (187 aa).

At 1–24 (MKVSAVETGEISQVSAPRKGMIRG) the chain is on the cytoplasmic side. The helical transmembrane segment at 25–45 (LSIMDFILRIVAAIGTLGSAL) threads the bilayer. Residues 46-72 (STGTTRETLPFTTQFVKFRAVFDDLPT) lie on the Extracellular side of the membrane. The helical transmembrane segment at 73–93 (FVFFVTSNSIVCGYLVLSLAL) threads the bilayer. Residues 94–108 (SFFHIIRRSSAAKSR) lie on the Cytoplasmic side of the membrane. A helical membrane pass occupies residues 109 to 129 (ILLVFLDTVMFGLLTTGAAAA). Over 130 to 163 (GTIVYVSHYGNVNANWFPFCGQYNHFCERISGSL) the chain is Extracellular. Residues 164–184 (IGSFIAVVIFMIIILMSAVSI) traverse the membrane as a helical segment. Residues 185 to 187 (SKH) lie on the Cytoplasmic side of the membrane.

This sequence belongs to the Casparian strip membrane proteins (CASP) family. Homodimer and heterodimers.

It is found in the cell membrane. This chain is CASP-like protein 2, found in Lotus japonicus (Lotus corniculatus var. japonicus).